We begin with the raw amino-acid sequence, 206 residues long: LexA repressor (206 aa).

The H-T-H motif DNA-binding region spans 28–48 (RAEIARELGFRSANAAEEHLK). Catalysis depends on for autocatalytic cleavage activity residues S123 and K160.

This sequence belongs to the peptidase S24 family. As to quaternary structure, homodimer.

It carries out the reaction Hydrolysis of Ala-|-Gly bond in repressor LexA.. Represses a number of genes involved in the response to DNA damage (SOS response), including recA and lexA. In the presence of single-stranded DNA, RecA interacts with LexA causing an autocatalytic cleavage which disrupts the DNA-binding part of LexA, leading to derepression of the SOS regulon and eventually DNA repair. This chain is LexA repressor, found in Vibrio atlanticus (strain LGP32) (Vibrio splendidus (strain Mel32)).